The chain runs to 461 residues: Cyclin-A2-4 (461 aa).

This sequence belongs to the cyclin family. Cyclin AB subfamily.

This chain is Cyclin-A2-4 (CYCA2-4), found in Arabidopsis thaliana (Mouse-ear cress).